A 400-amino-acid chain; its full sequence is Argininosuccinate synthase (400 aa).

Residue 8–16 participates in ATP binding; it reads AYSGGLDTS. Tyr85 lines the L-citrulline pocket. Gly115 contacts ATP. L-aspartate is bound by residues Thr117, Asn121, and Asp122. Asn121 lines the L-citrulline pocket. L-citrulline-binding residues include Arg125, Ser173, Glu258, and Tyr270.

It belongs to the argininosuccinate synthase family. Type 1 subfamily. Homotetramer.

Its subcellular location is the cytoplasm. The catalysed reaction is L-citrulline + L-aspartate + ATP = 2-(N(omega)-L-arginino)succinate + AMP + diphosphate + H(+). Its pathway is amino-acid biosynthesis; L-arginine biosynthesis; L-arginine from L-ornithine and carbamoyl phosphate: step 2/3. The chain is Argininosuccinate synthase from Staphylococcus haemolyticus (strain JCSC1435).